Consider the following 56-residue polypeptide: MSHKNIWNKHSRTYGKGSRGCRICGNRSGLIRKYGLSICRQCFREKSQNLGFDKYR.

Positions 21, 24, 39, and 42 each coordinate Zn(2+).

Belongs to the universal ribosomal protein uS14 family. The cofactor is Zn(2+).

In Guillardia theta (Cryptophyte), this protein is Small ribosomal subunit protein uS14 (rps29A).